A 271-amino-acid polypeptide reads, in one-letter code: Formamidopyrimidine-DNA glycosylase (271 aa).

Pro-2 serves as the catalytic Schiff-base intermediate with DNA. Glu-3 acts as the Proton donor in catalysis. Lys-57 acts as the Proton donor; for beta-elimination activity in catalysis. 3 residues coordinate DNA: His-90, Arg-109, and Lys-151. The FPG-type zinc finger occupies 236 to 270; sequence HVYGRGGETCTECGHLLSEIRLGQRTTVFCSLCQT. The active-site Proton donor; for delta-elimination activity is the Arg-260.

It belongs to the FPG family. Monomer. It depends on Zn(2+) as a cofactor.

The enzyme catalyses Hydrolysis of DNA containing ring-opened 7-methylguanine residues, releasing 2,6-diamino-4-hydroxy-5-(N-methyl)formamidopyrimidine.. It carries out the reaction 2'-deoxyribonucleotide-(2'-deoxyribose 5'-phosphate)-2'-deoxyribonucleotide-DNA = a 3'-end 2'-deoxyribonucleotide-(2,3-dehydro-2,3-deoxyribose 5'-phosphate)-DNA + a 5'-end 5'-phospho-2'-deoxyribonucleoside-DNA + H(+). Functionally, involved in base excision repair of DNA damaged by oxidation or by mutagenic agents. Acts as a DNA glycosylase that recognizes and removes damaged bases. Has a preference for oxidized purines, such as 7,8-dihydro-8-oxoguanine (8-oxoG). Has AP (apurinic/apyrimidinic) lyase activity and introduces nicks in the DNA strand. Cleaves the DNA backbone by beta-delta elimination to generate a single-strand break at the site of the removed base with both 3'- and 5'-phosphates. The polypeptide is Formamidopyrimidine-DNA glycosylase (Shewanella amazonensis (strain ATCC BAA-1098 / SB2B)).